A 491-amino-acid chain; its full sequence is UDP-N-acetylmuramate--L-alanine ligase (491 aa).

126–132 (GTHGKTT) is an ATP binding site.

The protein belongs to the MurCDEF family.

Its subcellular location is the cytoplasm. It catalyses the reaction UDP-N-acetyl-alpha-D-muramate + L-alanine + ATP = UDP-N-acetyl-alpha-D-muramoyl-L-alanine + ADP + phosphate + H(+). The protein operates within cell wall biogenesis; peptidoglycan biosynthesis. Functionally, cell wall formation. This is UDP-N-acetylmuramate--L-alanine ligase from Photorhabdus laumondii subsp. laumondii (strain DSM 15139 / CIP 105565 / TT01) (Photorhabdus luminescens subsp. laumondii).